The primary structure comprises 146 residues: Hemoglobin A/D subunit beta (146 aa).

In terms of domain architecture, Globin spans 2–146 (HWTSEEKQYI…VAHALALGYH (145 aa)). Heme b contacts are provided by His63 and His92.

Belongs to the globin family. In terms of assembly, hemoglobins A and D are heterotetramers of alpha-1, alpha-2 and two identical beta chains. As to expression, red blood cells.

In terms of biological role, involved in oxygen transport from the lung to the various peripheral tissues. The protein is Hemoglobin A/D subunit beta of Aldabrachelys gigantea (Aldabra giant tortoise).